The sequence spans 440 residues: N-succinylarginine dihydrolase (440 aa).

Substrate-binding positions include 17 to 26 (GGLSPGNLAS), asparagine 108, and 135 to 136 (HR). The tract at residues 17 to 37 (GGLSPGNLASQSHVGEPSHPR) is disordered. Residue glutamate 172 is part of the active site. Arginine 210 contributes to the substrate binding site. Residue histidine 246 is part of the active site. 2 residues coordinate substrate: aspartate 248 and asparagine 358. Catalysis depends on cysteine 364, which acts as the Nucleophile.

Belongs to the succinylarginine dihydrolase family. As to quaternary structure, homodimer.

It carries out the reaction N(2)-succinyl-L-arginine + 2 H2O + 2 H(+) = N(2)-succinyl-L-ornithine + 2 NH4(+) + CO2. It participates in amino-acid degradation; L-arginine degradation via AST pathway; L-glutamate and succinate from L-arginine: step 2/5. In terms of biological role, catalyzes the hydrolysis of N(2)-succinylarginine into N(2)-succinylornithine, ammonia and CO(2). The protein is N-succinylarginine dihydrolase of Myxococcus xanthus (strain DK1622).